The chain runs to 775 residues: E3 ubiquitin-protein ligase UHRF1 (775 aa).

The Ubiquitin-like domain maps to 1–77 (MWIQVRTMDG…IVQLLVRQIP (77 aa)). Positions 81 to 128 (PTKDKECGISDADSGCGSGQGESDKNSSCGEGATDVDGQPAGINSENV) are disordered. Tudor-like regions lie at residues 131 to 207 (SLYK…LRAR) and 214 to 283 (DLKV…IEEP). A linker region spans residues 293–301 (PQKRQNGPE). The PHD-type zinc-finger motif lies at 299–366 (GPECKHCKDN…DWYCPDCRND (68 aa)). Histone H3R2me0 binding stretches follow at residues 333-337 (CDECD) and 353-355 (PQD). One can recognise a YDG domain in the interval 419–582 (GPIPGVPVGT…FLVWRYLLRR (164 aa)). The tract at residues 445–446 (HV) is required to promote base flipping. Residues 463–464 (AG) and aspartate 469 contribute to the DNA site. Required for formation of a 5-methylcytosine-binding pocket stretches follow at residues 466-469 (YEDD) and 478-481 (YTGS). Positions 616-628 (ASKEREKENKTED) are enriched in basic and acidic residues. The disordered stretch occupies residues 616-655 (ASKEREKENKTEDELSESPSKGKRKRNSAGSGLSDAKSTP). The RING-type zinc-finger motif lies at 706–745 (CICCQEVVYEPITTECHHNICKGCLDRSFKALVHNCPACR).

Its subcellular location is the nucleus. The catalysed reaction is S-ubiquitinyl-[E2 ubiquitin-conjugating enzyme]-L-cysteine + [acceptor protein]-L-lysine = [E2 ubiquitin-conjugating enzyme]-L-cysteine + N(6)-ubiquitinyl-[acceptor protein]-L-lysine.. It functions in the pathway protein modification; protein ubiquitination. Functionally, multidomain protein that acts as a key epigenetic regulator by bridging DNA methylation and chromatin modification. Specifically recognizes and binds hemimethylated DNA at replication forks via its YDG domain and recruits dnmt1 methyltransferase to ensure faithful propagation of the DNA methylation patterns through DNA replication. In addition to its role in maintenance of DNA methylation, also plays a key role in chromatin modification: through its tudor-like regions and PHD-type zinc fingers, specifically recognizes and binds histone H3 trimethylated at 'Lys-9' (H3K9me3) and unmethylated at 'Arg-2' (H3R2me0), respectively, and recruits chromatin proteins. Enriched in pericentric heterochromatin where it recruits different chromatin modifiers required for this chromatin replication. Also localizes to euchromatic regions where it negatively regulates transcription possibly by impacting DNA methylation and histone modifications. Has E3 ubiquitin-protein ligase activity by mediating the ubiquitination of target proteins. However, it is still unclear how E3 ubiquitin-protein ligase activity is related to its role in chromatin in vivo. This Xenopus tropicalis (Western clawed frog) protein is E3 ubiquitin-protein ligase UHRF1 (uhrf1).